The following is a 196-amino-acid chain: Ribonuclease HII (196 aa).

Positions 9-196 (NLIAGVDEVG…APVKRALNLV (188 aa)) constitute an RNase H type-2 domain. 3 residues coordinate a divalent metal cation: D15, E16, and D107.

The protein belongs to the RNase HII family. Mn(2+) is required as a cofactor. The cofactor is Mg(2+).

The protein localises to the cytoplasm. The enzyme catalyses Endonucleolytic cleavage to 5'-phosphomonoester.. In terms of biological role, endonuclease that specifically degrades the RNA of RNA-DNA hybrids. The polypeptide is Ribonuclease HII (Proteus mirabilis (strain HI4320)).